The primary structure comprises 88 residues: Apolipoprotein C-I (88 aa).

A signal peptide spans 1-26 (MRLFLSLPVLVVVLAMVLEGPAPTQA).

This sequence belongs to the apolipoprotein C1 family.

Its subcellular location is the secreted. Inhibitor of lipoprotein binding to the low density lipoprotein (LDL) receptor, LDL receptor-related protein, and very low density lipoprotein (VLDL) receptor. Associates with high density lipoproteins (HDL) and the triacylglycerol-rich lipoproteins in the plasma and makes up about 10% of the protein of the VLDL and 2% of that of HDL. Appears to interfere directly with fatty acid uptake and is also the major plasma inhibitor of cholesteryl ester transfer protein (CETP). Binds free fatty acids and reduces their intracellular esterification. Modulates the interaction of APOE with beta-migrating VLDL and inhibits binding of beta-VLDL to the LDL receptor-related protein. This is Apolipoprotein C-I (APOC1) from Mirounga angustirostris (Northern elephant seal).